Here is an 83-residue protein sequence, read N- to C-terminus: Mu-theraphotoxin-Hhn2l (83 aa).

The N-terminal stretch at methionine 1–alanine 21 is a signal peptide. Residues serine 22–arginine 48 constitute a propeptide that is removed on maturation. Disulfide bonds link cysteine 50-cysteine 65, cysteine 57-cysteine 70, and cysteine 64-cysteine 77. At leucine 81 the chain carries Leucine amide.

It belongs to the neurotoxin 10 (Hwtx-1) family. 15 (Hntx-3) subfamily. As to quaternary structure, monomer. In terms of tissue distribution, expressed by the venom gland.

The protein resides in the secreted. Its function is as follows. Lethal neurotoxin. Selectively blocks tetrodotoxin-sensitive voltage-gated sodium channels (Nav). Does not affect tetrodotoxin-resistant voltage-gated sodium channels or calcium channels. In Cyriopagopus hainanus (Chinese bird spider), this protein is Mu-theraphotoxin-Hhn2l.